We begin with the raw amino-acid sequence, 241 residues long: MPKAVIFDLDGTLVHSLPGLTDALNKTLAEDDLAPLDEAAVKRMVGEGAGLLVARAFAAYGLGRADDADDTATQARLARFLAHYAPDPLAGASVYPGALALLGALAARGIRLGVCTNKPEGPARALLEGLGLADPIMDVVGGDTLAQRKPDPAPLRALLDSLGVEADQALMVGDSPTDVATAKAAGVPVVVMSYGYSREPVASLGALAVFDDFASLGDWLGFPQPGGDRLGATPALSENPA.

Aspartate 8 serves as the catalytic Nucleophile. 3 residues coordinate Mg(2+): aspartate 8, aspartate 10, and aspartate 174.

Belongs to the HAD-like hydrolase superfamily. CbbY/CbbZ/Gph/YieH family. It depends on Mg(2+) as a cofactor.

The catalysed reaction is 2-phosphoglycolate + H2O = glycolate + phosphate. It functions in the pathway organic acid metabolism; glycolate biosynthesis; glycolate from 2-phosphoglycolate: step 1/1. In terms of biological role, specifically catalyzes the dephosphorylation of 2-phosphoglycolate. Is involved in the dissimilation of the intracellular 2-phosphoglycolate formed during the DNA repair of 3'-phosphoglycolate ends, a major class of DNA lesions induced by oxidative stress. The chain is Phosphoglycolate phosphatase from Rhodospirillum rubrum (strain ATCC 11170 / ATH 1.1.1 / DSM 467 / LMG 4362 / NCIMB 8255 / S1).